The chain runs to 91 residues: MPLHKSAEKRLRQSERRNARNRSRKKELKVLVKTMQKLIDTSAEKAVVEVAYRSAVQKLDRLGVKNYIHANKASRKKSQLTRLMNSYVKAD.

Residues 1 to 18 show a composition bias toward basic and acidic residues; that stretch reads MPLHKSAEKRLRQSERRN. The disordered stretch occupies residues 1-26; that stretch reads MPLHKSAEKRLRQSERRNARNRSRKK.

The protein belongs to the bacterial ribosomal protein bS20 family.

Functionally, binds directly to 16S ribosomal RNA. This Pelodictyon phaeoclathratiforme (strain DSM 5477 / BU-1) protein is Small ribosomal subunit protein bS20.